Reading from the N-terminus, the 366-residue chain is tRNA/tmRNA (uracil-C(5))-methyltransferase (366 aa).

5 residues coordinate S-adenosyl-L-methionine: glutamine 190, tyrosine 218, asparagine 223, glutamate 239, and aspartate 299. Cysteine 324 (nucleophile) is an active-site residue. Glutamate 358 (proton acceptor) is an active-site residue.

The protein belongs to the class I-like SAM-binding methyltransferase superfamily. RNA M5U methyltransferase family. TrmA subfamily.

It carries out the reaction uridine(54) in tRNA + S-adenosyl-L-methionine = 5-methyluridine(54) in tRNA + S-adenosyl-L-homocysteine + H(+). The catalysed reaction is uridine(341) in tmRNA + S-adenosyl-L-methionine = 5-methyluridine(341) in tmRNA + S-adenosyl-L-homocysteine + H(+). Functionally, dual-specificity methyltransferase that catalyzes the formation of 5-methyluridine at position 54 (m5U54) in all tRNAs, and that of position 341 (m5U341) in tmRNA (transfer-mRNA). The protein is tRNA/tmRNA (uracil-C(5))-methyltransferase of Salmonella arizonae (strain ATCC BAA-731 / CDC346-86 / RSK2980).